Reading from the N-terminus, the 283-residue chain is NFU1 iron-sulfur cluster scaffold homolog, mitochondrial (283 aa).

A mitochondrion-targeting transit peptide spans 1–30 (MSKFLSQAALNTLRNTRLGSRQLVRSFAGI). Residues 182–250 (IKELLDTRIR…IPEVESVEQV (69 aa)) form a nifU region. [4Fe-4S] cluster-binding residues include C219 and C222.

It belongs to the NifU family.

It localises to the mitochondrion. Molecular scaffold for [Fe-S] cluster assembly of mitochondrial iron-sulfur proteins. The sequence is that of NFU1 iron-sulfur cluster scaffold homolog, mitochondrial from Drosophila erecta (Fruit fly).